Consider the following 789-residue polypeptide: Trimethylamine-oxide aldolase (789 aa).

It in the C-terminal section; belongs to the GcvT family.

It catalyses the reaction trimethylamine N-oxide + H(+) = dimethylamine + formaldehyde. Its function is as follows. Catalyzes the conversion of trimethylamine N-oxide (TMAO) to dimethylamine (DMA) and formaldehyde. The chain is Trimethylamine-oxide aldolase from Ruegeria pomeroyi (strain ATCC 700808 / DSM 15171 / DSS-3) (Silicibacter pomeroyi).